The chain runs to 158 residues: NADH-quinone oxidoreductase subunit B (158 aa).

[4Fe-4S] cluster-binding residues include cysteine 37, cysteine 38, cysteine 102, and cysteine 132.

The protein belongs to the complex I 20 kDa subunit family. As to quaternary structure, NDH-1 is composed of 14 different subunits. Subunits NuoB, C, D, E, F, and G constitute the peripheral sector of the complex. Requires [4Fe-4S] cluster as cofactor.

It localises to the cell inner membrane. The enzyme catalyses a quinone + NADH + 5 H(+)(in) = a quinol + NAD(+) + 4 H(+)(out). Functionally, NDH-1 shuttles electrons from NADH, via FMN and iron-sulfur (Fe-S) centers, to quinones in the respiratory chain. The immediate electron acceptor for the enzyme in this species is believed to be ubiquinone. Couples the redox reaction to proton translocation (for every two electrons transferred, four hydrogen ions are translocated across the cytoplasmic membrane), and thus conserves the redox energy in a proton gradient. The sequence is that of NADH-quinone oxidoreductase subunit B from Thioalkalivibrio sulfidiphilus (strain HL-EbGR7).